We begin with the raw amino-acid sequence, 167 residues long: SsrA-binding protein (167 aa).

Positions 139–158 (QNHDKRDAAKDRDWQRDKQR) are enriched in basic and acidic residues. A disordered region spans residues 139 to 167 (QNHDKRDAAKDRDWQRDKQRVMRRHNRDA).

Belongs to the SmpB family.

The protein localises to the cytoplasm. Its function is as follows. Required for rescue of stalled ribosomes mediated by trans-translation. Binds to transfer-messenger RNA (tmRNA), required for stable association of tmRNA with ribosomes. tmRNA and SmpB together mimic tRNA shape, replacing the anticodon stem-loop with SmpB. tmRNA is encoded by the ssrA gene; the 2 termini fold to resemble tRNA(Ala) and it encodes a 'tag peptide', a short internal open reading frame. During trans-translation Ala-aminoacylated tmRNA acts like a tRNA, entering the A-site of stalled ribosomes, displacing the stalled mRNA. The ribosome then switches to translate the ORF on the tmRNA; the nascent peptide is terminated with the 'tag peptide' encoded by the tmRNA and targeted for degradation. The ribosome is freed to recommence translation, which seems to be the essential function of trans-translation. The protein is SsrA-binding protein of Xanthomonas axonopodis pv. citri (strain 306).